The following is a 212-amino-acid chain: External core antigen (212 aa).

Residues 1–19 (MQLFHLCLIISCSCPTVQA) form the signal peptide. The tract at residues 25–27 (GWL) is HBEAG. Residues 165–212 (NAPILSTLPETTVVRRRGRSPRRRTPSPRRRRSQSPRRRRSQSRESQC) form a disordered region. The span at 178-205 (VRRRGRSPRRRTPSPRRRRSQSPRRRRS) shows a compositional bias: basic residues. Residues 184–190 (SPRRRTP) form a 1; half-length repeat. The interval 184–206 (SPRRRTPSPRRRRSQSPRRRRSQ) is 3 X 8 AA repeats of S-P-R-R-R-R-S-Q. A propeptide spanning residues 184–212 (SPRRRTPSPRRRRSQSPRRRRSQSRESQC) is cleaved from the precursor. 2 tandem repeats follow at residues 191–198 (SPRRRRSQ) and 199–206 (SPRRRRSQ).

This sequence belongs to the orthohepadnavirus precore antigen family. In terms of assembly, homodimerizes. Phosphorylated. Post-translationally, cleaved by host furin.

The protein resides in the secreted. The protein localises to the host nucleus. Its function is as follows. May regulate immune response to the intracellular capsid in acting as a T-cell tolerogen, by having an immunoregulatory effect which prevents destruction of infected cells by cytotoxic T-cells. This immune regulation may predispose to chronicity during perinatal infections and prevent severe liver injury during adult infections. The chain is External core antigen from Hepatitis B virus genotype B2 (isolate Indonesia/pIDW420/1988) (HBV-B).